Reading from the N-terminus, the 127-residue chain is Glycine cleavage system H protein (127 aa).

The Lipoyl-binding domain occupies 24 to 106 (TATLGISAFA…YGEGWLVKVQ (83 aa)). N6-lipoyllysine is present on Lys-65.

The protein belongs to the GcvH family. As to quaternary structure, the glycine cleavage system is composed of four proteins: P, T, L and H. (R)-lipoate is required as a cofactor.

In terms of biological role, the glycine cleavage system catalyzes the degradation of glycine. The H protein shuttles the methylamine group of glycine from the P protein to the T protein. The protein is Glycine cleavage system H protein of Thermosynechococcus vestitus (strain NIES-2133 / IAM M-273 / BP-1).